A 380-amino-acid polypeptide reads, in one-letter code: Tryptophan 2,3-dioxygenase (380 aa).

Substrate contacts are provided by residues 57–61 and arginine 128; that span reads FIITH. Residue histidine 313 participates in heme binding. Threonine 328 lines the substrate pocket.

It belongs to the tryptophan 2,3-dioxygenase family. Homotetramer. Dimer of dimers. The cofactor is heme.

The catalysed reaction is L-tryptophan + O2 = N-formyl-L-kynurenine. It functions in the pathway amino-acid degradation; L-tryptophan degradation via kynurenine pathway; L-kynurenine from L-tryptophan: step 1/2. It participates in pigment biosynthesis; ommochrome biosynthesis. Heme-dependent dioxygenase that catalyzes the oxidative cleavage of the L-tryptophan (L-Trp) pyrrole ring and converts L-tryptophan to N-formyl-L-kynurenine. Catalyzes the oxidative cleavage of the indole moiety. The polypeptide is Tryptophan 2,3-dioxygenase (Drosophila persimilis (Fruit fly)).